We begin with the raw amino-acid sequence, 333 residues long: 4-hydroxyproline epimerase (333 aa).

The Proton acceptor role is filled by Cys-90. Residues 91–92 (GH) and Asp-249 contribute to the substrate site. Cys-253 (proton donor) is an active-site residue. Position 254-255 (254-255 (GT)) interacts with substrate.

It belongs to the proline racemase family. As to quaternary structure, homodimer.

It catalyses the reaction trans-4-hydroxy-L-proline = cis-4-hydroxy-D-proline. Allows intracellular utilization of 4-hydroxyproline, one of the major constituents of host collagen, by converting 4-hydroxy-L-proline to 4-hydroxy-D-proline, which can be further metabolized by intracellular 4-hydroxy-D-proline oxidases. Strong B-cell mitogen. Plays an important role in the regulation of intra- and extracellular amino acid pools, allowing the bacterium to profit from host precursors and enzymatic pathways. The sequence is that of 4-hydroxyproline epimerase from Brucella suis (strain ATCC 23445 / NCTC 10510).